The sequence spans 288 residues: Pantothenate synthetase (288 aa).

An ATP-binding site is contributed by 30–37 (MGNLHNGH). His-37 acts as the Proton donor in catalysis. Residue Gln-61 participates in (R)-pantoate binding. Residue Gln-61 coordinates beta-alanine. 149–152 (GQKD) is a binding site for ATP. Gln-155 serves as a coordination point for (R)-pantoate. ATP is bound by residues Val-178 and 186–189 (LSSR).

The protein belongs to the pantothenate synthetase family. As to quaternary structure, homodimer.

Its subcellular location is the cytoplasm. It catalyses the reaction (R)-pantoate + beta-alanine + ATP = (R)-pantothenate + AMP + diphosphate + H(+). It functions in the pathway cofactor biosynthesis; (R)-pantothenate biosynthesis; (R)-pantothenate from (R)-pantoate and beta-alanine: step 1/1. In terms of biological role, catalyzes the condensation of pantoate with beta-alanine in an ATP-dependent reaction via a pantoyl-adenylate intermediate. The sequence is that of Pantothenate synthetase from Tolumonas auensis (strain DSM 9187 / NBRC 110442 / TA 4).